Here is a 181-residue protein sequence, read N- to C-terminus: UPF0301 protein MXAN_2022 (181 aa).

Belongs to the UPF0301 (AlgH) family.

The polypeptide is UPF0301 protein MXAN_2022 (Myxococcus xanthus (strain DK1622)).